A 431-amino-acid chain; its full sequence is Phosphoribosylamine--glycine ligase (431 aa).

The ATP-grasp domain maps to 108–315; it reads KDFLARHKIP…LVLLIEAALA (208 aa). An ATP-binding site is contributed by 134-195; sequence LREKGAPIVI…EEFLDGEEAS (62 aa). Positions 285 and 287 each coordinate Mg(2+).

It belongs to the GARS family. Mg(2+) serves as cofactor. Requires Mn(2+) as cofactor.

The enzyme catalyses 5-phospho-beta-D-ribosylamine + glycine + ATP = N(1)-(5-phospho-beta-D-ribosyl)glycinamide + ADP + phosphate + H(+). It participates in purine metabolism; IMP biosynthesis via de novo pathway; N(1)-(5-phospho-D-ribosyl)glycinamide from 5-phospho-alpha-D-ribose 1-diphosphate: step 2/2. The sequence is that of Phosphoribosylamine--glycine ligase from Pseudomonas syringae pv. tomato (strain ATCC BAA-871 / DC3000).